The chain runs to 142 residues: Large ribosomal subunit protein uL11 (142 aa).

It belongs to the universal ribosomal protein uL11 family. In terms of assembly, part of the ribosomal stalk of the 50S ribosomal subunit. Interacts with L10 and the large rRNA to form the base of the stalk. L10 forms an elongated spine to which L12 dimers bind in a sequential fashion forming a multimeric L10(L12)X complex. Post-translationally, one or more lysine residues are methylated.

Functionally, forms part of the ribosomal stalk which helps the ribosome interact with GTP-bound translation factors. This is Large ribosomal subunit protein uL11 from Akkermansia muciniphila (strain ATCC BAA-835 / DSM 22959 / JCM 33894 / BCRC 81048 / CCUG 64013 / CIP 107961 / Muc).